Reading from the N-terminus, the 138-residue chain is Large ribosomal subunit protein mL54 (138 aa).

The N-terminal 14 residues, 1-14, are a transit peptide targeting the mitochondrion; the sequence is MATKRLFGATRTWA.

This sequence belongs to the mitochondrion-specific ribosomal protein mL54 family. As to quaternary structure, component of the mitochondrial large ribosomal subunit (mt-LSU). Mature mammalian 55S mitochondrial ribosomes consist of a small (28S) and a large (39S) subunit. The 28S small subunit contains a 12S ribosomal RNA (12S mt-rRNA) and 30 different proteins. The 39S large subunit contains a 16S rRNA (16S mt-rRNA), a copy of mitochondrial valine transfer RNA (mt-tRNA(Val)), which plays an integral structural role, and 52 different proteins.

The protein localises to the mitochondrion. This is Large ribosomal subunit protein mL54 (MRPL54) from Homo sapiens (Human).